A 354-amino-acid polypeptide reads, in one-letter code: Phosphate acyltransferase (354 aa).

This sequence belongs to the PlsX family. Homodimer. Probably interacts with PlsY.

It is found in the cytoplasm. The enzyme catalyses a fatty acyl-[ACP] + phosphate = an acyl phosphate + holo-[ACP]. It participates in lipid metabolism; phospholipid metabolism. Functionally, catalyzes the reversible formation of acyl-phosphate (acyl-PO(4)) from acyl-[acyl-carrier-protein] (acyl-ACP). This enzyme utilizes acyl-ACP as fatty acyl donor, but not acyl-CoA. This chain is Phosphate acyltransferase, found in Ralstonia nicotianae (strain ATCC BAA-1114 / GMI1000) (Ralstonia solanacearum).